The sequence spans 413 residues: Serine hydroxymethyltransferase (413 aa).

(6S)-5,6,7,8-tetrahydrofolate contacts are provided by residues Leu115 and 119 to 121 (GHL). An N6-(pyridoxal phosphate)lysine modification is found at Lys224.

It belongs to the SHMT family. Homodimer. Requires pyridoxal 5'-phosphate as cofactor.

It localises to the cytoplasm. The catalysed reaction is (6R)-5,10-methylene-5,6,7,8-tetrahydrofolate + glycine + H2O = (6S)-5,6,7,8-tetrahydrofolate + L-serine. It functions in the pathway one-carbon metabolism; tetrahydrofolate interconversion. The protein operates within amino-acid biosynthesis; glycine biosynthesis; glycine from L-serine: step 1/1. Functionally, catalyzes the reversible interconversion of serine and glycine with tetrahydrofolate (THF) serving as the one-carbon carrier. This reaction serves as the major source of one-carbon groups required for the biosynthesis of purines, thymidylate, methionine, and other important biomolecules. Also exhibits THF-independent aldolase activity toward beta-hydroxyamino acids, producing glycine and aldehydes, via a retro-aldol mechanism. The sequence is that of Serine hydroxymethyltransferase from Mycoplasma capricolum subsp. capricolum (strain California kid / ATCC 27343 / NCTC 10154).